We begin with the raw amino-acid sequence, 203 residues long: MQIKEPLRVGIGGPVGSGKTALTLALCQRLRNVYNIAVVTNDIYTREDAEFLTRNEALAPERIIGVETGGCPHTAIREDASMNLEAVAQLSERFNPLDIVFVESGGDNLAATFSPELSDLTIYVIDVAAGEKIPRKGGPGITKSDLLVINKIDLAPMVGASLEVMEKDARRMRGERPFIFTNLKRGQGLEDIVGFIEKQGLML.

A GTP-binding site is contributed by 13–20 (GPVGSGKT).

This sequence belongs to the SIMIBI class G3E GTPase family. UreG subfamily. Homodimer. UreD, UreF and UreG form a complex that acts as a GTP-hydrolysis-dependent molecular chaperone, activating the urease apoprotein by helping to assemble the nickel containing metallocenter of UreC. The UreE protein probably delivers the nickel.

The protein localises to the cytoplasm. In terms of biological role, facilitates the functional incorporation of the urease nickel metallocenter. This process requires GTP hydrolysis, probably effectuated by UreG. This is Urease accessory protein UreG from Methylobacillus flagellatus (strain ATCC 51484 / DSM 6875 / VKM B-1610 / KT).